A 611-amino-acid chain; its full sequence is Protein ral2 (611 aa).

Kelch repeat units follow at residues 43–91, 96–149, and 175–224; these read EAFV…HSGD, KLIF…EVNG, and YLII…VINK. Serine 604 carries the post-translational modification Phosphoserine.

Essential for mating and for recognition of the mating pheromone, and for the determination of cell shape. Implicated in activation of the ras1 protein. In Schizosaccharomyces pombe (strain 972 / ATCC 24843) (Fission yeast), this protein is Protein ral2 (ral2).